Consider the following 138-residue polypeptide: Large-conductance mechanosensitive channel (138 aa).

A run of 2 helical transmembrane segments spans residues 10–30 and 76–96; these read FAMR…AAFG and GSFI…FLAI.

It belongs to the MscL family. Homopentamer.

It localises to the cell inner membrane. Channel that opens in response to stretch forces in the membrane lipid bilayer. May participate in the regulation of osmotic pressure changes within the cell. In Serratia proteamaculans (strain 568), this protein is Large-conductance mechanosensitive channel.